The following is a 959-amino-acid chain: rDNA transcriptional regulator pol5 (959 aa).

Ser-742 and Ser-743 each carry phosphoserine. The tract at residues 936–959 (HQQTSTAASSPQKTGHHENEKTNH) is disordered. The segment covering 937 to 948 (QQTSTAASSPQK) has biased composition (polar residues). The segment covering 950–959 (GHHENEKTNH) has biased composition (basic and acidic residues).

The protein belongs to the MYBBP1A family. As to quaternary structure, interacts with cdc10.

It is found in the nucleus. Plays an important role in the regulation of rRNA transcription. Binds to rDNA promoter fragments. The protein is rDNA transcriptional regulator pol5 (pol5) of Schizosaccharomyces pombe (strain 972 / ATCC 24843) (Fission yeast).